The sequence spans 1765 residues: Sodium channel protein type 11 subunit alpha (1765 aa).

Residues Met-1–Ser-126 are Cytoplasmic-facing. An I repeat occupies Phe-115–Arg-406. A helical membrane pass occupies residues Val-127 to Asn-148. An N-linked (GlcNAc...) asparagine glycan is attached at Asn-149. The Extracellular portion of the chain corresponds to Asn-149–Asn-159. The helical transmembrane segment at Ile-160 to Ala-179 threads the bilayer. Topologically, residues Arg-180 to Arg-191 are cytoplasmic. Residues Asp-192–Leu-211 traverse the membrane as a helical segment. Over Gly-212 to Ser-219 the chain is Extracellular. N-linked (GlcNAc...) asparagine glycosylation occurs at Asn-217. A helical; Voltage-sensor membrane pass occupies residues Thr-220–Leu-239. Residues Lys-240–Asp-255 lie on the Cytoplasmic side of the membrane. Residues Val-256–Leu-269 form a helical membrane-spanning segment. The Extracellular portion of the chain corresponds to Val-270–Ser-342. Cys-283 and Cys-320 form a disulfide bridge. Asn-303, Asn-327, and Asn-336 each carry an N-linked (GlcNAc...) asparagine glycan. Residues Phe-343 to Leu-367 constitute an intramembrane region (pore-forming). Residues Arg-368–Phe-374 lie on the Extracellular side of the membrane. The helical transmembrane segment at Val-375–Ala-400 threads the bilayer. Over Tyr-401–Thr-570 the chain is Cytoplasmic. The tract at residues Arg-470–Pro-490 is disordered. The II repeat unit spans residues Cys-557–Gln-821. A helical transmembrane segment spans residues Ile-571–Met-594. Residues Glu-595–Asp-605 are Extracellular-facing. The chain crosses the membrane as a helical span at residues Ile-606 to Leu-629. The Cytoplasmic portion of the chain corresponds to Asp-630–His-637. Residues Gly-638–Leu-659 traverse the membrane as a helical segment. The Extracellular segment spans residues Ser-660–Ser-664. Asn-662 is a glycosylation site (N-linked (GlcNAc...) asparagine). A helical; Voltage-sensor membrane pass occupies residues Phe-665–Leu-684. Topologically, residues Asn-685–Gly-699 are cytoplasmic. Residues Asn-700–Ala-722 form a helical membrane-spanning segment. Residues Lys-723–Asp-742 lie on the Extracellular side of the membrane. Asn-725 carries an N-linked (GlcNAc...) asparagine glycan. Residues Phe-743–Trp-763 constitute an intramembrane region (pore-forming). Over Glu-764–Pro-773 the chain is Extracellular. Residues Cys-765 and Cys-775 are joined by a disulfide bond. The helical transmembrane segment at Leu-774 to Leu-799 threads the bilayer. The Cytoplasmic segment spans residues Asn-800–Gln-1030. Positions Asn-850–Ala-869 are disordered. The III repeat unit spans residues Asn-1023–Leu-1320. A helical membrane pass occupies residues Ile-1031 to Ile-1053. Topologically, residues Phe-1054–Lys-1067 are extracellular. A helical membrane pass occupies residues Leu-1068–Phe-1093. Residues Arg-1094–Ser-1099 lie on the Cytoplasmic side of the membrane. Residues Ala-1100–Thr-1117 traverse the membrane as a helical segment. Residue Asn-1118 is a topological domain, extracellular. A helical; Voltage-sensor membrane pass occupies residues Leu-1119–Phe-1140. Residues Glu-1141 to Asn-1159 lie on the Cytoplasmic side of the membrane. A helical transmembrane segment spans residues Val-1160–Gly-1181. Over Lys-1182–Val-1224 the chain is Extracellular. N-linked (GlcNAc...) asparagine glycosylation is found at Asn-1188, Asn-1197, Asn-1203, and Asn-1211. An intramembrane region (pore-forming) is located at residues Gly-1225–Ala-1246. Residues Ala-1247–Asn-1262 are Extracellular-facing. The helical transmembrane segment at Leu-1263 to Ile-1289 threads the bilayer. At Asp-1290–Asp-1342 the chain is on the cytoplasmic side. The stretch at Ile-1329–Gln-1619 is one IV repeat. The helical transmembrane segment at Leu-1343–Ala-1366 threads the bilayer. Topologically, residues Glu-1367–Lys-1377 are extracellular. Residues Ile-1378–Leu-1401 form a helical membrane-spanning segment. Residues Arg-1402–Thr-1407 lie on the Cytoplasmic side of the membrane. Residues Asn-1408–Glu-1431 traverse the membrane as a helical segment. Residues Asn-1432–Leu-1440 are Extracellular-facing. Residues Phe-1441–Arg-1463 traverse the membrane as a helical; Voltage-sensor segment. Residues Thr-1464–Asn-1478 lie on the Cytoplasmic side of the membrane. The helical transmembrane segment at Ile-1479–Val-1501 threads the bilayer. The Extracellular segment spans residues Lys-1502–Thr-1515. The pore-forming intramembrane region spans Phe-1516–Pro-1538. Topologically, residues Met-1539–Ile-1559 are extracellular. The helical transmembrane segment at Ala-1560–Leu-1584 threads the bilayer. Over Glu-1585 to Asp-1765 the chain is Cytoplasmic.

The protein belongs to the sodium channel (TC 1.A.1.10) family. Nav1.9/SCN11A subfamily. In terms of assembly, the voltage-resistant sodium channel consists of an ion conducting pore forming alpha-subunit regulated by one or more auxiliary subunits SCN1B, SCN2B and SCN3B. In terms of tissue distribution, expressed in the dorsal root ganglia (C-fiber neurons), spinal cord, trigeminal ganglia, testis, ovary, uterus and small intestine.

Its subcellular location is the cell membrane. The enzyme catalyses Na(+)(in) = Na(+)(out). Functionally, sodium channel mediating the voltage-dependent sodium ion permeability of excitable membranes. Assuming opened or closed conformations in response to the voltage difference across the membrane, the protein forms a sodium-selective channel through which sodium ions may pass in accordance with their electrochemical gradient. Involved in membrane depolarization during action potential in nociceptors which function as key relay stations for the electrical transmission of pain signals from the periphery to the central nervous system. Also involved in rapid BDNF-evoked neuronal depolarization. In Mus musculus (Mouse), this protein is Sodium channel protein type 11 subunit alpha.